The sequence spans 960 residues: Probable RNA-binding protein 19 (960 aa).

The RRM 1 domain occupies 2–79 (SRLIVKNLPN…SRITVEFCKS (78 aa)). Disordered stretches follow at residues 85-119 (KPRA…KKKK) and 149-294 (WAND…TTCH). Residues Ser-174, Ser-176, and Ser-180 each carry the phosphoserine modification. Residues 176–194 (SGQESEEEGAGEDLEEEAS) show a composition bias toward acidic residues. The span at 273–286 (RPPEARAETEKPAN) shows a compositional bias: basic and acidic residues. 2 consecutive RRM domains span residues 294–369 (HTVK…REKN) and 402–480 (GRLF…PSTI). Lys-481 participates in a covalent cross-link: Glycyl lysine isopeptide (Lys-Gly) (interchain with G-Cter in SUMO2). The segment at 491–513 (LGSSSYKKKKEAQDKANSASSHN) is disordered. The region spanning 587-659 (TVILVKNLPA…VPLYLEWAPV (73 aa)) is the RRM 4 domain. The segment at 667-729 (PQKKKLQDTP…EEEEEESLPG (63 aa)) is disordered. Composition is skewed to acidic residues over residues 689-706 (TVPD…EEGA) and 714-726 (EEEE…EEES). RRM domains follow at residues 730–811 (CTLF…ISER) and 832–912 (SKIL…WADS). Phosphoserine is present on residues Ser-936, Ser-949, and Ser-951.

Belongs to the RRM MRD1 family. As to expression, expressed in the crypts of Lieberkuhn of the intestine and in intestinal neoplasia (at protein level).

Its subcellular location is the nucleus. The protein localises to the nucleolus. The protein resides in the nucleoplasm. It localises to the cytoplasm. It is found in the chromosome. In terms of biological role, plays a role in embryo pre-implantation development. The sequence is that of Probable RNA-binding protein 19 (RBM19) from Homo sapiens (Human).